The primary structure comprises 203 residues: ATP phosphoribosyltransferase (203 aa).

It belongs to the ATP phosphoribosyltransferase family. Short subfamily. As to quaternary structure, heteromultimer composed of HisG and HisZ subunits.

Its subcellular location is the cytoplasm. It catalyses the reaction 1-(5-phospho-beta-D-ribosyl)-ATP + diphosphate = 5-phospho-alpha-D-ribose 1-diphosphate + ATP. It participates in amino-acid biosynthesis; L-histidine biosynthesis; L-histidine from 5-phospho-alpha-D-ribose 1-diphosphate: step 1/9. In terms of biological role, catalyzes the condensation of ATP and 5-phosphoribose 1-diphosphate to form N'-(5'-phosphoribosyl)-ATP (PR-ATP). Has a crucial role in the pathway because the rate of histidine biosynthesis seems to be controlled primarily by regulation of HisG enzymatic activity. The sequence is that of ATP phosphoribosyltransferase from Campylobacter fetus subsp. fetus (strain 82-40).